We begin with the raw amino-acid sequence, 64 residues long: Temporin-ALd (64 aa).

The N-terminal stretch at 1 to 22 is a signal peptide; it reads MFTMKKSLLLLFFLGTIHLSLC. Positions 23–46 are excised as a propeptide; the sequence is EQERNAEEERRDDLGERQAEVEKR. Leucine amide is present on Leu62.

Expressed by the skin glands.

The protein resides in the secreted. Functionally, antimicrobial peptide with activity against Gram-positive and Gram-negative bacteria and against fungi. Has been tested against S.aureus (MIC=1.25 ug/mL), B.pumilus (MIC=2.5 ug/mL), B.cereus (MIC=15.0 ug/mL), E.coli (MIC=1.25 ug/mL), B.dysenteriae (MIC=5.0 ug/mL), A.cacoaceticus (MIC=15.0 ug/mL), P.aeruginosa (MIC=5.0 ug/mL) and C.albicans (MIC=1.25 ug/mL). Also shows a weak hemolytic activity. The protein is Temporin-ALd of Amolops loloensis (Lolokou Sucker Frog).